Here is a 289-residue protein sequence, read N- to C-terminus: ATP synthase gamma chain (289 aa).

This sequence belongs to the ATPase gamma chain family. As to quaternary structure, F-type ATPases have 2 components, CF(1) - the catalytic core - and CF(0) - the membrane proton channel. CF(1) has five subunits: alpha(3), beta(3), gamma(1), delta(1), epsilon(1). CF(0) has three main subunits: a, b and c.

Its subcellular location is the cell membrane. In terms of biological role, produces ATP from ADP in the presence of a proton gradient across the membrane. The gamma chain is believed to be important in regulating ATPase activity and the flow of protons through the CF(0) complex. This chain is ATP synthase gamma chain, found in Mycoplasmopsis synoviae (strain 53) (Mycoplasma synoviae).